A 206-amino-acid polypeptide reads, in one-letter code: Dihydrofolate reductase (206 aa).

Residues 6–204 (SLTLIVALTT…FDYEFEMWTR (199 aa)) form the DHFR domain. Residues Ala-12 and 18-24 (GIGRSNS) each bind NADP(+). 32 to 37 (EISYFK) provides a ligand contact to substrate. NADP(+) is bound at residue 59–61 (RKT). Residue Arg-75 participates in substrate binding. Residues 81–83 (TRN) and 124–131 (GGAQLYKA) contribute to the NADP(+) site.

The protein belongs to the dihydrofolate reductase family.

The catalysed reaction is (6S)-5,6,7,8-tetrahydrofolate + NADP(+) = 7,8-dihydrofolate + NADPH + H(+). Its pathway is cofactor biosynthesis; tetrahydrofolate biosynthesis; 5,6,7,8-tetrahydrofolate from 7,8-dihydrofolate: step 1/1. Functionally, key enzyme in folate metabolism. Catalyzes an essential reaction for de novo glycine and purine synthesis, and for DNA precursor synthesis. The protein is Dihydrofolate reductase of Pneumocystis carinii.